Consider the following 41-residue polypeptide: Hadrurin (41 aa).

Belongs to the non-disulfide-bridged peptide (NDBP) superfamily. Long chain multifunctional peptide (group 2) family. In terms of tissue distribution, expressed by the venom gland.

The protein localises to the secreted. In terms of biological role, antimicrobial activity against S.typhimurium, K.pneumoniae, E.cloacae, P.aeruginosa, E.coli and S.marcescens. Also shows hemolytic activity when tested in human erythrocytes. This is Hadrurin from Hoffmannihadrurus aztecus (Mexican scorpion).